The chain runs to 185 residues: Elongation factor P (185 aa).

This sequence belongs to the elongation factor P family.

It is found in the cytoplasm. It participates in protein biosynthesis; polypeptide chain elongation. Involved in peptide bond synthesis. Stimulates efficient translation and peptide-bond synthesis on native or reconstituted 70S ribosomes in vitro. Probably functions indirectly by altering the affinity of the ribosome for aminoacyl-tRNA, thus increasing their reactivity as acceptors for peptidyl transferase. The polypeptide is Elongation factor P (Acaryochloris marina (strain MBIC 11017)).